A 138-amino-acid polypeptide reads, in one-letter code: Putative nickel-responsive regulator (138 aa).

Positions 76, 87, 89, and 95 each coordinate Ni(2+).

Belongs to the transcriptional regulatory CopG/NikR family. Ni(2+) is required as a cofactor.

Functionally, transcriptional regulator. This is Putative nickel-responsive regulator from Pseudomonas putida (strain W619).